The following is a 593-amino-acid chain: Developmental and secondary metabolism regulator VEL1 (593 aa).

Polar residues predominate over residues M1–R16. Positions M1 to G21 are disordered. One can recognise a Velvet domain in the interval G21–R212. The Nuclear localization signal motif lies at E35 to C40. A disordered region spans residues R218–M569. The segment covering P310–P326 has biased composition (low complexity). The segment covering Q327–H340 has biased composition (pro residues). 2 stretches are compositionally biased toward low complexity: residues S341–Q360 and Q367–Y389. 2 stretches are compositionally biased toward polar residues: residues S413–P429 and G440–L449. The interval Q443–P487 is PEST. Low complexity predominate over residues H450–S465. Composition is skewed to polar residues over residues P482–H505 and N512–F534.

This sequence belongs to the velvet family. VeA subfamily. As to quaternary structure, component of the heterotrimeric velvet complex composed of LAE1, VEL1 and VEL2; VEL1 acting as a bridging protein between LAE1 and VEL2.

Its subcellular location is the nucleus. The protein localises to the cytoplasm. Its function is as follows. Component of the velvet transcription factor complex that controls sexual/asexual developmental ratio in response to light, promoting sexual development in the darkness while stimulating asexual sporulation under illumination. The velvet complex acts as a global regulator for secondary metabolite gene expression. Controls the expression of the T-toxin gene cluster. Promotes oxidative stress tolerance and acts as a virulence factors during infection. Negatively regulate mycelial pigmentation and controls sexual development, as well as asexual development during vegetative growth. This is Developmental and secondary metabolism regulator VEL1 from Cochliobolus heterostrophus (strain C5 / ATCC 48332 / race O) (Southern corn leaf blight fungus).